A 465-amino-acid polypeptide reads, in one-letter code: 3-isopropylmalate dehydratase large subunit (465 aa).

Cysteine 347, cysteine 407, and cysteine 410 together coordinate [4Fe-4S] cluster.

It belongs to the aconitase/IPM isomerase family. LeuC type 1 subfamily. Heterodimer of LeuC and LeuD. The cofactor is [4Fe-4S] cluster.

The catalysed reaction is (2R,3S)-3-isopropylmalate = (2S)-2-isopropylmalate. It functions in the pathway amino-acid biosynthesis; L-leucine biosynthesis; L-leucine from 3-methyl-2-oxobutanoate: step 2/4. Catalyzes the isomerization between 2-isopropylmalate and 3-isopropylmalate, via the formation of 2-isopropylmaleate. The polypeptide is 3-isopropylmalate dehydratase large subunit (Aeromonas salmonicida (strain A449)).